A 189-amino-acid polypeptide reads, in one-letter code: Small ribosomal subunit protein uS5 (189 aa).

The region spanning 22–85 (FVDKLVAINR…ESAKRDLIFV (64 aa)) is the S5 DRBM domain.

The protein belongs to the universal ribosomal protein uS5 family. Part of the 30S ribosomal subunit. Contacts proteins S4 and S8.

With S4 and S12 plays an important role in translational accuracy. Functionally, located at the back of the 30S subunit body where it stabilizes the conformation of the head with respect to the body. In Agrobacterium fabrum (strain C58 / ATCC 33970) (Agrobacterium tumefaciens (strain C58)), this protein is Small ribosomal subunit protein uS5.